A 394-amino-acid chain; its full sequence is Obg-like ATPase 1 (394 aa).

An OBG-type G domain is found at 25–282; the sequence is LKIGIVGLPN…MAPDEAAKYC (258 aa). ATP-binding positions include 34–39, 56–60, and 94–97; these read NVGKST, FCTIE, and DIAG. Residues Ser-38 and Thr-58 each contribute to the Mg(2+) site. Position 129 (Phe-129) interacts with GTP. Residues 230 to 231, Leu-231, and 263 to 265 contribute to the ATP site; these read NL and SGV. 263–265 is a binding site for GTP; sequence SGV. The 84-residue stretch at 303-386 folds into the TGS domain; that stretch reads NLIYFFTAGP…QDGDIIFFKF (84 aa).

Belongs to the TRAFAC class OBG-HflX-like GTPase superfamily. OBG GTPase family. YchF/OLA1 subfamily. As to quaternary structure, monomer (Potential). Interacts with CAR4/GAP1. Requires Mg(2+) as cofactor.

The protein localises to the cytoplasm. Its subcellular location is the cytosol. Activated by GAP1. Hydrolyzes ATP, and can also hydrolyze GTP with lower efficiency. Has lower affinity for GTP (Potential). Exhibits GTPase activity. Confers sensitivity to salinity stress by suppressing the anti-oxidation enzymatic activities and increasing lipid peroxidation thus leading to the accumulation of reactive oxygen species (ROS). Acts as a negative regulator of disease resistance against bacterial pathogen. In Arabidopsis thaliana (Mouse-ear cress), this protein is Obg-like ATPase 1.